Reading from the N-terminus, the 516-residue chain is Probable 2-methylcitrate dehydratase (516 aa).

The protein belongs to the PrpD family.

It carries out the reaction (2S,3S)-2-methylcitrate = 2-methyl-cis-aconitate + H2O. It participates in organic acid metabolism; propanoate degradation. Functionally, catalyzes the stereospecific dehydration of (2S,3S)-2-methylcitrate (2-MC) to yield the cis isomer of 2-methyl-aconitate. The polypeptide is Probable 2-methylcitrate dehydratase (PDH1) (Saccharomyces cerevisiae (strain ATCC 204508 / S288c) (Baker's yeast)).